We begin with the raw amino-acid sequence, 455 residues long: Asparagine--tRNA ligase (455 aa).

The protein belongs to the class-II aminoacyl-tRNA synthetase family. In terms of assembly, homodimer.

The protein localises to the cytoplasm. The enzyme catalyses tRNA(Asn) + L-asparagine + ATP = L-asparaginyl-tRNA(Asn) + AMP + diphosphate + H(+). In Lawsonia intracellularis (strain PHE/MN1-00), this protein is Asparagine--tRNA ligase.